The following is a 976-amino-acid chain: Vacuolar membrane protease (976 aa).

The Cytoplasmic portion of the chain corresponds to 1-15 (MKLKSVFRSVLKYRK). A helical transmembrane segment spans residues 16–36 (TNLSLLLLITYSIITLLYIFD). At 37-359 (HERYKLNLPK…KFFVISAKTL (323 aa)) the chain is on the vacuolar side. N-linked (GlcNAc...) asparagine glycosylation is found at Asn96 and Asn121. His156 and Asp168 together coordinate Zn(2+). N-linked (GlcNAc...) asparagine glycosylation occurs at Asn189. The active-site Proton acceptor is Glu200. Zn(2+) is bound at residue Glu201. 2 N-linked (GlcNAc...) asparagine glycosylation sites follow: Asn212 and Asn217. Positions 226 and 300 each coordinate Zn(2+). Residues 360 to 380 (FYWNCIFLLVSPVVAIGLYLI) traverse the membrane as a helical segment. At 381–392 (SRDRMTWKSHSW) the chain is on the cytoplasmic side. The helical transmembrane segment at 393–412 (LSWTRFPLSLAAGIIVQKLF) threads the bilayer. At 413-428 (SNDIIRSNPLTFSRNY) the chain is on the vacuolar side. Residues 429–449 (FWPISAFFTQVIFTSYVLINC) traverse the membrane as a helical segment. At 450–461 (SNFFFPCADMKS) the chain is on the cytoplasmic side. Residues 462 to 482 (LSIIELFIILWTILLFTSKLL) traverse the membrane as a helical segment. Residues 483–496 (YSSDYRYTGLYPLS) are Vacuolar-facing. A helical transmembrane segment spans residues 497-517 (IFFLLSTIAAILRLLALALGM). Over 518–627 (RTRKRLGREC…NSLKLEYTDY (110 aa)) the chain is Cytoplasmic. Residues 528-610 (RDHHSNYSSH…PLLKGSNSME (83 aa)) form a disordered region. Over residues 549–558 (NLEQPQDQFT) the composition is skewed to polar residues. Positions 559–570 (SSQDDQASIQDD) are enriched in low complexity. Positions 582–601 (NVDEDHGMDSSSQQHDERVP) are enriched in basic and acidic residues. Residues 628–648 (AWIIQFLLIVPIPSFILFNSV) form a helical membrane-spanning segment. Topologically, residues 649 to 668 (DVIMDALNHTVQEGSKATFD) are vacuolar. An N-linked (GlcNAc...) asparagine glycan is attached at Asn656. A helical membrane pass occupies residues 669-689 (VLRFGMVGSILMALPILPFFY). Over 690–692 (KVN) the chain is Cytoplasmic. The chain crosses the membrane as a helical span at residues 693-713 (YITISLTALLFLISASKTLLV). Topologically, residues 714–976 (HPFTNSNPLK…LVIVKDAIIL (263 aa)) are vacuolar. 5 N-linked (GlcNAc...) asparagine glycosylation sites follow: Asn768, Asn796, Asn811, Asn866, and Asn937.

Belongs to the peptidase M28 family. Requires Zn(2+) as cofactor.

It localises to the vacuole membrane. May be involved in vacuolar sorting and osmoregulation. The protein is Vacuolar membrane protease of Saccharomyces cerevisiae (strain RM11-1a) (Baker's yeast).